The chain runs to 462 residues: L-seryl-tRNA(Sec) selenium transferase (462 aa).

K293 is subject to N6-(pyridoxal phosphate)lysine.

It belongs to the SelA family. The cofactor is pyridoxal 5'-phosphate.

It is found in the cytoplasm. The enzyme catalyses L-seryl-tRNA(Sec) + selenophosphate + H(+) = L-selenocysteinyl-tRNA(Sec) + phosphate. The protein operates within aminoacyl-tRNA biosynthesis; selenocysteinyl-tRNA(Sec) biosynthesis; selenocysteinyl-tRNA(Sec) from L-seryl-tRNA(Sec) (bacterial route): step 1/1. Its function is as follows. Converts seryl-tRNA(Sec) to selenocysteinyl-tRNA(Sec) required for selenoprotein biosynthesis. This is L-seryl-tRNA(Sec) selenium transferase from Clostridium botulinum (strain Langeland / NCTC 10281 / Type F).